The chain runs to 117 residues: G antigen 12B/C/D/E (117 aa).

Positions 1 to 117 are disordered; the sequence is MSWRGRSTYY…PEEGEKQSQC (117 aa). Acidic residues-rich tracts occupy residues 32–45 and 87–96; these read FSDEVEPATPEEGE and ECEDGPDGQE. A compositionally biased stretch (basic and acidic residues) spans 103–117; it reads EEVKTPEEGEKQSQC.

The protein belongs to the GAGE family.

The sequence is that of G antigen 12B/C/D/E (GAGE12B) from Homo sapiens (Human).